The sequence spans 198 residues: Endothelin-3 (198 aa).

The N-terminal stretch at 1–16 (MEPGLWLLFGLTVTSA) is a signal peptide. The propeptide occupies 17 to 86 (AGLVPCPQPG…SKGGPVHGRA (70 aa)). Residues 22-79 (CPQPGDAGKSGVPGTPPTARSEGDIQEPVAMTAVQGPSPRSPEQEQELGRFGEQASKG) form a disordered region. 2 disulfides stabilise this stretch: C89-C103 and C91-C99. A propeptide spanning residues 110 to 198 (INTPEQTVPY…RGNGGLRPTR (89 aa)) is cleaved from the precursor. The interval 150 to 164 (CACVQSQDSACLHFC) is endothelin-like. Residues 174 to 198 (SRTATNPDKEEEPASRGNGGLRPTR) form a disordered region.

This sequence belongs to the endothelin/sarafotoxin family. Expressed in which included heart, lung, liver, kidney, spleen, stomach, pancreas, duodenum, colon, uterus, ovary and testis.

The protein resides in the secreted. Its function is as follows. Endothelins are endothelium-derived vasoconstrictor peptides. This Canis lupus familiaris (Dog) protein is Endothelin-3 (EDN3).